The chain runs to 249 residues: DNA repair protein RecO (249 aa).

Belongs to the RecO family.

Its function is as follows. Involved in DNA repair and RecF pathway recombination. In Sinorhizobium medicae (strain WSM419) (Ensifer medicae), this protein is DNA repair protein RecO.